Reading from the N-terminus, the 288-residue chain is Bifunctional protein FolD (288 aa).

NADP(+) contacts are provided by residues 168 to 170, Thr-195, and Val-236; that span reads GRG.

The protein belongs to the tetrahydrofolate dehydrogenase/cyclohydrolase family. In terms of assembly, homodimer.

The enzyme catalyses (6R)-5,10-methylene-5,6,7,8-tetrahydrofolate + NADP(+) = (6R)-5,10-methenyltetrahydrofolate + NADPH. The catalysed reaction is (6R)-5,10-methenyltetrahydrofolate + H2O = (6R)-10-formyltetrahydrofolate + H(+). The protein operates within one-carbon metabolism; tetrahydrofolate interconversion. Functionally, catalyzes the oxidation of 5,10-methylenetetrahydrofolate to 5,10-methenyltetrahydrofolate and then the hydrolysis of 5,10-methenyltetrahydrofolate to 10-formyltetrahydrofolate. This Mycobacterium sp. (strain JLS) protein is Bifunctional protein FolD.